The sequence spans 208 residues: uncharacterized protein (208 aa).

This is an uncharacterized protein from Saccharum officinarum (Sugarcane).